We begin with the raw amino-acid sequence, 312 residues long: MIEFEKPNITVVEQEDSYGKFVVEPLERGFGTTLGNSLRRVLLTSIPGTGLVYVQIDGVLHEFSTVPGVREDVTKIILNLKKLELKSLSDERKVIELDVEGPATVTADDLKVDADVQVLNPDQYICTIAEGGHLHMEIAVQNGRGYVAASDNKSDDMPIGVIPVDSLFSPIKKVNYQVESTRVGKRDDFDKLTFEIWTDGSIKPNDALSFAAKILVEHFKVFESADADTKFSEVMVEKEDDKKEKKLEMTIEELDLSVRSYNCLKRAGINTLQELTDMTESDMMRVRNLGRKSLEEVKNKLTDLGLSLRQED.

Residues 1-225 form an alpha N-terminal domain (alpha-NTD) region; it reads MIEFEKPNIT…VEHFKVFESA (225 aa). The segment at 243–312 is alpha C-terminal domain (alpha-CTD); it reads KEKKLEMTIE…DLGLSLRQED (70 aa).

This sequence belongs to the RNA polymerase alpha chain family. Homodimer. The RNAP catalytic core consists of 2 alpha, 1 beta, 1 beta' and 1 omega subunit. When a sigma factor is associated with the core the holoenzyme is formed, which can initiate transcription.

The catalysed reaction is RNA(n) + a ribonucleoside 5'-triphosphate = RNA(n+1) + diphosphate. In terms of biological role, DNA-dependent RNA polymerase catalyzes the transcription of DNA into RNA using the four ribonucleoside triphosphates as substrates. This is DNA-directed RNA polymerase subunit alpha from Lactobacillus helveticus (strain DPC 4571).